The sequence spans 366 residues: DNA replication and repair protein RecF (366 aa).

30–37 (GRNAQGKT) contributes to the ATP binding site.

This sequence belongs to the RecF family.

The protein localises to the cytoplasm. The RecF protein is involved in DNA metabolism; it is required for DNA replication and normal SOS inducibility. RecF binds preferentially to single-stranded, linear DNA. It also seems to bind ATP. The chain is DNA replication and repair protein RecF from Streptococcus thermophilus (strain ATCC BAA-250 / LMG 18311).